A 109-amino-acid chain; its full sequence is MFGKGGMGNLMKQAQQMQERMQKMQEQLAEMEVVGEAGAGMVKVTMAGSHSVRRIEIDQSLMEDDKEMIEDLVAAAVNDAVRRVEEQSKSKMGELTGGMQLPPGMKLPF.

Disordered regions lie at residues 1-23 and 87-109; these read MFGK…RMQK and QSKS…KLPF. A compositionally biased stretch (low complexity) spans 11 to 23; it reads MKQAQQMQERMQK.

Belongs to the YbaB/EbfC family. As to quaternary structure, homodimer.

The protein resides in the cytoplasm. Its subcellular location is the nucleoid. In terms of biological role, binds to DNA and alters its conformation. May be involved in regulation of gene expression, nucleoid organization and DNA protection. The sequence is that of Nucleoid-associated protein ASA_2087 from Aeromonas salmonicida (strain A449).